A 362-amino-acid polypeptide reads, in one-letter code: Protein-glutamate methylesterase/protein-glutamine glutaminase (362 aa).

A Response regulatory domain is found at 10–127; the sequence is RVLVVDDSAF…SLNMHVARDE (118 aa). At aspartate 61 the chain carries 4-aspartylphosphate. Residues 173–362 form the CheB-type methylesterase domain; that stretch reads RLPRRLVLIG…DAITRAVGEG (190 aa). Active-site residues include serine 184, histidine 211, and aspartate 304.

It belongs to the CheB family. In terms of processing, phosphorylated by CheA. Phosphorylation of the N-terminal regulatory domain activates the methylesterase activity.

It is found in the cytoplasm. It catalyses the reaction [protein]-L-glutamate 5-O-methyl ester + H2O = L-glutamyl-[protein] + methanol + H(+). It carries out the reaction L-glutaminyl-[protein] + H2O = L-glutamyl-[protein] + NH4(+). Its function is as follows. Involved in chemotaxis. Part of a chemotaxis signal transduction system that modulates chemotaxis in response to various stimuli. Catalyzes the demethylation of specific methylglutamate residues introduced into the chemoreceptors (methyl-accepting chemotaxis proteins or MCP) by CheR. Also mediates the irreversible deamidation of specific glutamine residues to glutamic acid. The polypeptide is Protein-glutamate methylesterase/protein-glutamine glutaminase (Symbiobacterium thermophilum (strain DSM 24528 / JCM 14929 / IAM 14863 / T)).